The chain runs to 541 residues: Glucose-6-phosphate isomerase (541 aa).

Catalysis depends on Glu354, which acts as the Proton donor. Residues His385 and Lys505 contribute to the active site.

The protein belongs to the GPI family.

Its subcellular location is the cytoplasm. The enzyme catalyses alpha-D-glucose 6-phosphate = beta-D-fructose 6-phosphate. It participates in carbohydrate biosynthesis; gluconeogenesis. The protein operates within carbohydrate degradation; glycolysis; D-glyceraldehyde 3-phosphate and glycerone phosphate from D-glucose: step 2/4. In terms of biological role, catalyzes the reversible isomerization of glucose-6-phosphate to fructose-6-phosphate. The protein is Glucose-6-phosphate isomerase of Cupriavidus metallidurans (strain ATCC 43123 / DSM 2839 / NBRC 102507 / CH34) (Ralstonia metallidurans).